A 144-amino-acid chain; its full sequence is Ig heavy chain V region M167 (144 aa).

A signal peptide spans 1–19 (MKMWLNWVFLLTLLHGIQC). In terms of domain architecture, Ig-like spans 20-133 (EVKVVESGGG…GNSYFGYFDV (114 aa)).

This chain is Ig heavy chain V region M167, found in Mus musculus (Mouse).